Reading from the N-terminus, the 416-residue chain is Phosphoglycerate kinase (416 aa).

The (2R)-3-phosphoglycerate site is built by Val-23, Asp-24, Phe-25, Asn-26, Gln-38, Arg-39, Ser-62, His-63, Gly-65, Arg-66, Leu-121, Arg-122, His-168, and Arg-169. Position 212 (Gly-212) interacts with ADP. A CDP-binding site is contributed by Gly-212. Residues Ala-213 and Lys-214 each contribute to the AMP site. ATP is bound at residue Ala-213. Position 213 (Ala-213) interacts with Mg(2+). Asp-217 is a binding site for CDP. Asp-217 is a Mg(2+) binding site. Residue Lys-218 coordinates AMP. Lys-218 contributes to the ATP binding site. Gly-236 is a binding site for ADP. CDP is bound at residue Gly-236. AMP contacts are provided by Gly-237 and Gly-311. The ATP site is built by Gly-237 and Gly-311. CDP contacts are provided by Gly-336 and Phe-341. Phe-341 serves as a coordination point for ADP. Position 342 (Glu-342) interacts with AMP. Positions 342, 373, and 374 each coordinate ATP. Position 373 (Asp-373) interacts with Mg(2+).

It belongs to the phosphoglycerate kinase family. As to quaternary structure, monomer. It depends on Mg(2+) as a cofactor.

The protein resides in the cytoplasm. Its subcellular location is the mitochondrion. The enzyme catalyses (2R)-3-phosphoglycerate + ATP = (2R)-3-phospho-glyceroyl phosphate + ADP. It functions in the pathway carbohydrate degradation; glycolysis; pyruvate from D-glyceraldehyde 3-phosphate: step 2/5. Catalyzes one of the two ATP producing reactions in the glycolytic pathway via the reversible conversion of 1,3-diphosphoglycerate to 3-phosphoglycerate. Both L- and D- forms of purine and pyrimidine nucleotides can be used as substrates, but the activity is much lower on pyrimidines. Negatively regulates the biosynthesis of acetyl-CoA from pyruvate in the mitochondrion. The protein is Phosphoglycerate kinase (PGK1) of Komagataella pastoris (Yeast).